We begin with the raw amino-acid sequence, 171 residues long: 3-hydroxydecanoyl-[acyl-carrier-protein] dehydratase (171 aa).

Histidine 70 is an active-site residue.

It belongs to the thioester dehydratase family. FabA subfamily. As to quaternary structure, homodimer.

It is found in the cytoplasm. The enzyme catalyses a (3R)-hydroxyacyl-[ACP] = a (2E)-enoyl-[ACP] + H2O. It catalyses the reaction (3R)-hydroxydecanoyl-[ACP] = (2E)-decenoyl-[ACP] + H2O. The catalysed reaction is (2E)-decenoyl-[ACP] = (3Z)-decenoyl-[ACP]. Its pathway is lipid metabolism; fatty acid biosynthesis. Its function is as follows. Necessary for the introduction of cis unsaturation into fatty acids. Catalyzes the dehydration of (3R)-3-hydroxydecanoyl-ACP to E-(2)-decenoyl-ACP and then its isomerization to Z-(3)-decenoyl-ACP. Can catalyze the dehydratase reaction for beta-hydroxyacyl-ACPs with saturated chain lengths up to 16:0, being most active on intermediate chain length. In Ectopseudomonas mendocina (strain ymp) (Pseudomonas mendocina), this protein is 3-hydroxydecanoyl-[acyl-carrier-protein] dehydratase.